Reading from the N-terminus, the 543-residue chain is Zinc finger protein 852 (543 aa).

In terms of domain architecture, KRAB spans valine 8 to proline 82. Phosphoserine is present on serine 145. 12 consecutive C2H2-type zinc fingers follow at residues tyrosine 159–histidine 181, tyrosine 187–histidine 209, tyrosine 215–histidine 237, tyrosine 243–histidine 265, tyrosine 271–histidine 293, tyrosine 299–histidine 321, tyrosine 327–histidine 349, tyrosine 355–histidine 377, phenylalanine 383–histidine 405, tyrosine 411–histidine 433, tyrosine 439–histidine 461, and tyrosine 467–histidine 489.

This sequence belongs to the krueppel C2H2-type zinc-finger protein family.

Its subcellular location is the nucleus. May be involved in transcriptional regulation. This is Zinc finger protein 852 (ZNF852) from Homo sapiens (Human).